A 381-amino-acid polypeptide reads, in one-letter code: MSRPTGACPHAWRHQQQPLRGRMWAASPAFRRQLVLLRSLLPSPPAPSSVAGFPPSCPSCSSFLRVRTNHAMAASAGTVYEADAEAVVRRITPPLDRARHKGQAGKIAVIGGCREYTGAPYFAAISALKVGADLSHVFCTKDAATVIKSYSPELIVHPILEESYSVRDDERASVSSKILTEVGKWMERFDCIVVGPGLGRDSFLLDCVSNIMRHARQANIPTVVDGDGLFLVTNNLSLVEGNPLAILTPNVYEYKRLVQKVLNCDVDEETASEQLITLCQKIGDVTIMQKGKADVISDGKTVTQVSTFGSPRRCGGQGDILSGSVAVFASWARHFVLTNEQPTEKRKAASHAFEKNKRSTVTSDIIEFLGKSLEDICPAEH.

One can recognise a YjeF C-terminal domain in the interval 84–376; sequence AEAVVRRITP…EFLGKSLEDI (293 aa). (6S)-NADPHX is bound by residues G197 and 250–256; that span reads NVYEYKR. Residues 290–294 and 309–318 each bind ATP; these read KGKAD and GSPRRCGGQG. D319 contacts (6S)-NADPHX.

It belongs to the NnrD/CARKD family. Requires Mg(2+) as cofactor.

It carries out the reaction (6S)-NADHX + ATP = ADP + phosphate + NADH + H(+). The enzyme catalyses (6S)-NADPHX + ATP = ADP + phosphate + NADPH + H(+). Catalyzes the dehydration of the S-form of NAD(P)HX at the expense of ATP, which is converted to ADP. Together with NAD(P)HX epimerase, which catalyzes the epimerization of the S- and R-forms, the enzyme allows the repair of both epimers of NAD(P)HX, a damaged form of NAD(P)H that is a result of enzymatic or heat-dependent hydration. The polypeptide is ATP-dependent (S)-NAD(P)H-hydrate dehydratase (Sorghum bicolor (Sorghum)).